The sequence spans 379 residues: Putative glutamate--cysteine ligase 2 (379 aa).

The protein belongs to the glutamate--cysteine ligase type 2 family. YbdK subfamily.

It catalyses the reaction L-cysteine + L-glutamate + ATP = gamma-L-glutamyl-L-cysteine + ADP + phosphate + H(+). ATP-dependent carboxylate-amine ligase which exhibits weak glutamate--cysteine ligase activity. The protein is Putative glutamate--cysteine ligase 2 of Roseiflexus castenholzii (strain DSM 13941 / HLO8).